The following is a 371-amino-acid chain: tRNA-specific 2-thiouridylase MnmA (371 aa).

Residues 13 to 20 (GMSGGVDS) and methionine 39 each bind ATP. The segment at 99–101 (NPD) is interaction with target base in tRNA. Cysteine 104 (nucleophile) is an active-site residue. An intrachain disulfide couples cysteine 104 to cysteine 200. Glycine 128 lines the ATP pocket. The interval 150 to 152 (KDQ) is interaction with tRNA. Residue cysteine 200 is the Cysteine persulfide intermediate of the active site. Residues 308 to 309 (RY) are interaction with tRNA.

The protein belongs to the MnmA/TRMU family.

The protein localises to the cytoplasm. It carries out the reaction S-sulfanyl-L-cysteinyl-[protein] + uridine(34) in tRNA + AH2 + ATP = 2-thiouridine(34) in tRNA + L-cysteinyl-[protein] + A + AMP + diphosphate + H(+). Its function is as follows. Catalyzes the 2-thiolation of uridine at the wobble position (U34) of tRNA, leading to the formation of s(2)U34. This is tRNA-specific 2-thiouridylase MnmA from Bacillus cereus (strain ATCC 10987 / NRS 248).